The primary structure comprises 267 residues: 4-hydroxy-tetrahydrodipicolinate reductase (267 aa).

8-13 contacts NAD(+); it reads GANGRM. Arg-35 provides a ligand contact to NADP(+). Residues 98–100 and 122–125 each bind NAD(+); these read GTT and AANY. The Proton donor/acceptor role is filled by His-155. His-156 serves as a coordination point for (S)-2,3,4,5-tetrahydrodipicolinate. Lys-159 acts as the Proton donor in catalysis. A (S)-2,3,4,5-tetrahydrodipicolinate-binding site is contributed by 165–166; that stretch reads GT.

The protein belongs to the DapB family.

It is found in the cytoplasm. The catalysed reaction is (S)-2,3,4,5-tetrahydrodipicolinate + NAD(+) + H2O = (2S,4S)-4-hydroxy-2,3,4,5-tetrahydrodipicolinate + NADH + H(+). It catalyses the reaction (S)-2,3,4,5-tetrahydrodipicolinate + NADP(+) + H2O = (2S,4S)-4-hydroxy-2,3,4,5-tetrahydrodipicolinate + NADPH + H(+). It functions in the pathway amino-acid biosynthesis; L-lysine biosynthesis via DAP pathway; (S)-tetrahydrodipicolinate from L-aspartate: step 4/4. In terms of biological role, catalyzes the conversion of 4-hydroxy-tetrahydrodipicolinate (HTPA) to tetrahydrodipicolinate. The protein is 4-hydroxy-tetrahydrodipicolinate reductase of Pseudoalteromonas atlantica (strain T6c / ATCC BAA-1087).